Here is a 422-residue protein sequence, read N- to C-terminus: E3 ubiquitin-protein ligase CBLL2 (422 aa).

The RING-type zinc finger occupies 54 to 94; the sequence is CDKCDLPIKIYGRIIPCKHAFCYNCANLYDKIGYKICPRCS. Residues 93–151 are HYB domain; the sequence is CSYPVLRIEEHKRGSVFMCSVVQGCKRTYLSQKSLQAHIKRRHKRARKQVASASLEKLR. A C2H2-type zinc finger spans residues 109 to 135; that stretch reads FMCSVVQGCKRTYLSQKSLQAHIKRRH. Disordered regions lie at residues 190–213 and 378–422; these read MQQM…PELS and QTDA…HRPY. Positions 195-205 are enriched in basic and acidic residues; sequence HEQHNQPHKDL. A compositionally biased stretch (pro residues) spans 393–405; the sequence is LPPPPPTWSPPPS. Basic residues predominate over residues 410 to 422; that stretch reads GSHHSYQRRHRPY.

In terms of assembly, homodimer.

The protein resides in the cytoplasm. It catalyses the reaction S-ubiquitinyl-[E2 ubiquitin-conjugating enzyme]-L-cysteine + [acceptor protein]-L-lysine = [E2 ubiquitin-conjugating enzyme]-L-cysteine + N(6)-ubiquitinyl-[acceptor protein]-L-lysine.. Its pathway is protein modification; protein ubiquitination. In terms of biological role, E3 ubiquitin ligase catalyzing the covalent attachment of ubiquitin moieties onto substrate proteins. May operate on tyrosine-phosphorylated SRC substrates. This Macaca fascicularis (Crab-eating macaque) protein is E3 ubiquitin-protein ligase CBLL2 (CBLL2).